The following is a 1651-amino-acid chain: Roundabout homolog 1 (1651 aa).

The first 25 residues, 1 to 25, serve as a signal peptide directing secretion; that stretch reads MKWKHVPFLVMISLLSLSPNHLFLA. Topologically, residues 26 to 897 are extracellular; sequence QLIPDPEDVE…QQISDVVKQP (872 aa). The disordered stretch occupies residues 33-57; that stretch reads DVERGNDHGTPIPTSDNDDNSLGYT. Polar residues predominate over residues 44-56; sequence IPTSDNDDNSLGY. 5 consecutive Ig-like C2-type domains span residues 68–164, 170–257, 262–346, 351–446, and 455–541; these read PRIV…ASLE, DDFR…AELT, PSFV…ATLT, PHFV…LEVT, and PVIR…AYIE. Cysteines 89 and 147 form a disulfide. Residue Asn160 is glycosylated (N-linked (GlcNAc...) asparagine). 3 disulfides stabilise this stretch: Cys191-Cys240, Cys283-Cys330, and Cys372-Cys428. Asn463 carries an N-linked (GlcNAc...) asparagine glycan. An intrachain disulfide couples Cys476 to Cys525. Fibronectin type-III domains are found at residues 563-657, 676-773, and 778-874; these read APSK…TQDV, AVLH…TLEE, and PPQG…LDAH. 3 N-linked (GlcNAc...) asparagine glycosylation sites follow: Asn790, Asn820, and Asn827. Residues 898–918 traverse the membrane as a helical segment; sequence AFIAGIGAACWIILMVFSIWL. The Cytoplasmic portion of the chain corresponds to 919–1651; the sequence is YRHRKKRNGL…NNEELEETES (733 aa). Ser940 is subject to Phosphoserine. Thr948 bears the Phosphothreonine mark. The residue at position 1038 (Tyr1038) is a Phosphotyrosine; by ABL; in vitro. At Ser1055 the chain carries Phosphoserine. Tyr1073 and Tyr1114 each carry phosphotyrosine; by ABL; in vitro. 4 disordered regions span residues 1124 to 1202, 1224 to 1337, 1352 to 1397, and 1420 to 1651; these read KDYR…SEEY, YLQQ…ADME, EQTP…DGSF, and RRQM…ETES. Over residues 1137 to 1146 the composition is skewed to polar residues; the sequence is PYNQSYDQNT. Low complexity predominate over residues 1147–1163; it reads GGSYNSSDRGSSTSGSQ. Residues 1186–1196 show a composition bias toward pro residues; the sequence is LPPPPAHPPPH. At Thr1240 the chain carries Phosphothreonine. The span at 1255 to 1269 shows a compositional bias: polar residues; sequence YSHQSTATLTPSPQE. Residues 1281–1293 are compositionally biased toward basic and acidic residues; the sequence is ETGHMQHQPDRRR. The span at 1296–1307 shows a compositional bias: pro residues; it reads VSPPPPPRPISP. At Ser1297 the chain carries Phosphoserine. Over residues 1322–1336 the composition is skewed to acidic residues; it reads MDTDAPEEEEDEADM. Positions 1384 to 1397 are enriched in low complexity; the sequence is SSGRSSVSSSDGSF. Residues 1438–1451 are compositionally biased toward polar residues; it reads PRPTSPVSTDSNMS. A compositionally biased stretch (basic residues) spans 1459 to 1470; that stretch reads RPAKKLKHQPGH. Over residues 1480–1490 the composition is skewed to pro residues; the sequence is LPPPPVPPPAI. Composition is skewed to basic and acidic residues over residues 1516–1541 and 1549–1573; these read ARTDRSSDRKGSSYKGREVLDGRQVV and DPREAQEQQNDGKGRGNKAAKRDLP. The span at 1592–1601 shows a compositional bias: polar residues; it reads FPTSNNPRDP. A compositionally biased stretch (low complexity) spans 1602–1614; the sequence is SSSSSMSSRGSGS. Residues 1642–1651 show a composition bias toward acidic residues; that stretch reads NNEELEETES.

It belongs to the immunoglobulin superfamily. ROBO family. Homodimer. Dimerization is mediated by the extracellular domain and is independent of SLIT liganding. Interacts with SLIT1. Interacts with SLIT2. Interacts with FLRT3. Interacts with MYO9B (via Rho-GAP domain). In terms of processing, ubiquitinated. May be deubiquitinated by USP33. Widely expressed, with exception of kidney.

The protein localises to the cell membrane. It is found in the cell projection. The protein resides in the axon. It localises to the endoplasmic reticulum-Golgi intermediate compartment membrane. Functionally, receptor for SLIT1 and SLIT2 that mediates cellular responses to molecular guidance cues in cellular migration, including axonal navigation at the ventral midline of the neural tube and projection of axons to different regions during neuronal development. Interaction with the intracellular domain of FLRT3 mediates axon attraction towards cells expressing NTN1. In axon growth cones, the silencing of the attractive effect of NTN1 by SLIT2 may require the formation of a ROBO1-DCC complex. Plays a role in the regulation of cell migration via its interaction with MYO9B; inhibits MYO9B-mediated stimulation of RHOA GTPase activity, and thereby leads to increased levels of active, GTP-bound RHOA. May be required for lung development. The polypeptide is Roundabout homolog 1 (ROBO1) (Homo sapiens (Human)).